We begin with the raw amino-acid sequence, 212 residues long: uncharacterized protein (212 aa).

The NERD domain occupies 29–146; sequence KGKAGEKLVK…AAFHPKCSLK (118 aa).

This is an uncharacterized protein from Bacillus anthracis.